The chain runs to 234 residues: Orotidine 5'-phosphate decarboxylase (234 aa).

Residues aspartate 11, lysine 33, 60–69 (DLKFHDIPNT), threonine 120, arginine 181, glutamine 190, glycine 210, and arginine 211 contribute to the substrate site. Lysine 62 functions as the Proton donor in the catalytic mechanism.

This sequence belongs to the OMP decarboxylase family. Type 1 subfamily. As to quaternary structure, homodimer.

The catalysed reaction is orotidine 5'-phosphate + H(+) = UMP + CO2. The protein operates within pyrimidine metabolism; UMP biosynthesis via de novo pathway; UMP from orotate: step 2/2. In terms of biological role, catalyzes the decarboxylation of orotidine 5'-monophosphate (OMP) to uridine 5'-monophosphate (UMP). This chain is Orotidine 5'-phosphate decarboxylase, found in Shewanella sediminis (strain HAW-EB3).